A 271-amino-acid polypeptide reads, in one-letter code: Ribosomal RNA small subunit methyltransferase A (271 aa).

S-adenosyl-L-methionine contacts are provided by histidine 11, leucine 13, glycine 38, glutamate 58, aspartate 86, and asparagine 101.

The protein belongs to the class I-like SAM-binding methyltransferase superfamily. rRNA adenine N(6)-methyltransferase family. RsmA subfamily.

It is found in the cytoplasm. The catalysed reaction is adenosine(1518)/adenosine(1519) in 16S rRNA + 4 S-adenosyl-L-methionine = N(6)-dimethyladenosine(1518)/N(6)-dimethyladenosine(1519) in 16S rRNA + 4 S-adenosyl-L-homocysteine + 4 H(+). In terms of biological role, specifically dimethylates two adjacent adenosines (A1518 and A1519) in the loop of a conserved hairpin near the 3'-end of 16S rRNA in the 30S particle. May play a critical role in biogenesis of 30S subunits. The polypeptide is Ribosomal RNA small subunit methyltransferase A (Helicobacter pylori (strain G27)).